Reading from the N-terminus, the 839-residue chain is MVSLRSIFTSSILAAGLTRAHGSSGKTCPTSEVSPACYANQWETTFPPSDIKITGATWVQDNIYDVTLSYEAESLELENLTELKIIGLNSPTGGTKLVWSLNSKVYDIDNPAKWTTTLRVYTKSSADDCYVEMYPFQIQVDWCEAGASTDGCSAWKWPKSYDYDIGCDNMQDGVSRKHHPVYKWPKKCSSDCGVEPTTSDEPEEPTTSEEPVEPTSSDEEPTTSEEPTTSEEPEEPTTSDEPEEPTTSEEPEEPTTSEEPEEPTTSEEPTTSEEPEEPTSSDEEPTTSDEPEEPTTSDEPEEPTTSEEPTTSEEPEEPTTSSEEPTPSEEPEGPTCPTSEVSPACYADQWETTFPPSDIKITGATWVEDNIYDVTLSYEAESLELENLTELKIIGLNSPTGGTKVVWSLNSGIYDIDNPAKWTTTLRVYTKSSADDCYVEMYPFQIQVDWCEAGASTDGCSAWKWPKSYDYDIGCDNMQDGVSRKHHPVYKWPKKCSSNCGVEPTTSDEPEEPTTSEEPEEPTTSEEPEEPTSSDEEPTTSEEPEEPTTSDEPEEPTTSEEPEEPTTSEEPEEPTTSEEPEEPTTSDEEPGTTEEPLVPTTKTETDVSTTLLTVTDCGTKTCTKSLVITGVTKETVTTHGKTTVITTYCPLPTETVTPTPVTVTSTIYADESVTKTTVYTTGAVEKTVTVGGSSTVVVVHTPLTTAVVQSQSTDEIKTVVTARPSTTTIVRDVCYNSVCSVATIVTGVTEKTITFSTGSITVVPTYVPLVESEEHQRTASTSETRATSVVVPTVVGQSSSASATSSIFPSVTIHEGVANTVKNSMISGAVALLFNALFL.

An N-terminal signal peptide occupies residues 1-22; it reads MVSLRSIFTSSILAAGLTRAHG. The region spanning 24-194 is the Flo11 1 domain; the sequence is SGKTCPTSEV…PKKCSSDCGV (171 aa). 4 disulfide bridges follow: cysteine 28–cysteine 188, cysteine 37–cysteine 167, cysteine 129–cysteine 192, and cysteine 143–cysteine 152. Residue asparagine 79 is glycosylated (N-linked (GlcNAc...) asparagine). A disordered region spans residues 187 to 342; sequence KCSSDCGVEP…GPTCPTSEVS (156 aa). Positions 198–317 are enriched in acidic residues; that stretch reads TSDEPEEPTT…EPTTSEEPEE (120 aa). Residues 332–502 enclose the Flo11 2 domain; it reads EGPTCPTSEV…PKKCSSNCGV (171 aa). Asparagine 387 carries an N-linked (GlcNAc...) asparagine glycan. Residues 496 to 606 are disordered; it reads CSSNCGVEPT…LVPTTKTETD (111 aa). Residues 506 to 592 are compositionally biased toward acidic residues; the sequence is TSDEPEEPTT…PTTSDEEPGT (87 aa). Residues 593 to 606 are compositionally biased toward low complexity; sequence TEEPLVPTTKTETD.

It belongs to the flocculin family. Highly divergent.

Homophilic binding protein that enables kin discrimination in heterogeneous yeast populations by mediating homotypic cell-cell interactions during flocculation, a reversible and asexual process in which cells adhere to form aggregates (flocs). The polypeptide is Flocculation protein FLO11 (Komagataella phaffii (strain GS115 / ATCC 20864) (Yeast)).